The following is a 213-amino-acid chain: tRNA (guanine-N(7)-)-methyltransferase (213 aa).

S-adenosyl-L-methionine is bound by residues glutamate 44, glutamate 69, aspartate 96, and aspartate 118. Aspartate 118 is a catalytic residue. Residues lysine 122, aspartate 154, and 192–195 (TEYE) contribute to the substrate site.

Belongs to the class I-like SAM-binding methyltransferase superfamily. TrmB family.

It catalyses the reaction guanosine(46) in tRNA + S-adenosyl-L-methionine = N(7)-methylguanosine(46) in tRNA + S-adenosyl-L-homocysteine. Its pathway is tRNA modification; N(7)-methylguanine-tRNA biosynthesis. Its function is as follows. Catalyzes the formation of N(7)-methylguanine at position 46 (m7G46) in tRNA. The sequence is that of tRNA (guanine-N(7)-)-methyltransferase from Limosilactobacillus reuteri (strain DSM 20016) (Lactobacillus reuteri).